Consider the following 883-residue polypeptide: DNA mismatch repair protein MutS (883 aa).

Gly-619 to Ser-626 serves as a coordination point for ATP.

It belongs to the DNA mismatch repair MutS family.

This protein is involved in the repair of mismatches in DNA. It is possible that it carries out the mismatch recognition step. This protein has a weak ATPase activity. The polypeptide is DNA mismatch repair protein MutS (Marinomonas sp. (strain MWYL1)).